The following is a 501-amino-acid chain: G protein-activated inward rectifier potassium channel 1 (501 aa).

Positions 1-40 are disordered; that stretch reads MSALRRKFGDDYQVVTTSSSGSGLQPQGPGQGPQQQLVPK. The Cytoplasmic segment spans residues 1-80; the sequence is MSALRRKFGD…LFTTLVDLKW (80 aa). Over residues 18 to 37 the composition is skewed to low complexity; sequence SSSGSGLQPQGPGQGPQQQL. A helical membrane pass occupies residues 81 to 105; that stretch reads RWNLFIFILTYTVAWLFMASMWWVI. The Extracellular portion of the chain corresponds to 106 to 129; sequence AYTRGDLNKAHVGNYTPCVANVYN. A glycan (N-linked (GlcNAc...) asparagine) is linked at N119. An intramembrane region (helical; Pore-forming) is located at residues 130–141; the sequence is FPSAFLFFIETE. Residues 142–148 constitute an intramembrane region (pore-forming); that stretch reads ATIGYGY. The short motif at 143–148 is the Selectivity filter element; it reads TIGYGY. Topologically, residues 149–157 are extracellular; it reads RYITDKCPE. A helical transmembrane segment spans residues 158-179; it reads GIILFLFQSILGSIVDAFLIGC. The Cytoplasmic segment spans residues 180–501; the sequence is MFIKMSQPKK…LRKMNSDRFT (322 aa). Positions 182–209 are polyphosphoinositide (PIP2)-binding; the sequence is IKMSQPKKRAETLMFSEHAVISMRDGKL. Phosphoserine is present on residues S385 and S424. A compositionally biased stretch (polar residues) spans 456–467; that stretch reads TKMLSDPMSQSV. A disordered region spans residues 456–501; it reads TKMLSDPMSQSVADLPPKLQKMAGGPTRMEGNLPAKLRKMNSDRFT.

Belongs to the inward rectifier-type potassium channel (TC 1.A.2.1) family. KCNJ3 subfamily. Associates with KCNJ5/GIRK4 or KCNJ6/GIRK2 to form a G-protein activated heteromultimer pore-forming unit. The resulting inward current is much larger. Associates with KCNJ9/GIRK3 to form a G-protein activated heteromultimer pore-forming unit.

The protein localises to the membrane. The catalysed reaction is K(+)(in) = K(+)(out). With respect to regulation, heteromultimer composed of KCNJ3/GIRK1 and KCNJ5/GIRK4 is activated by phosphatidylinositol 4,5 biphosphate (PtdIns(4,5)P2). Functionally, inward rectifier potassium channels are characterized by a greater tendency to allow potassium to flow into the cell rather than out of it. Their voltage dependence is regulated by the concentration of extracellular potassium; as external potassium is raised, the voltage range of the channel opening shifts to more positive voltages. The inward rectification is mainly due to the blockage of outward current by internal magnesium. This potassium channel is controlled by G proteins. This receptor plays a crucial role in regulating the heartbeat. Forms a functional channel in association with KCNJ9/GIRK3. The sequence is that of G protein-activated inward rectifier potassium channel 1 (Kcnj3) from Rattus norvegicus (Rat).